Consider the following 219-residue polypeptide: Probable GTP-binding protein EngB (219 aa).

In terms of domain architecture, EngB-type G spans 24 to 207 (VQPEVAFAGR…HALIESWVRP (184 aa)). GTP contacts are provided by residues 32-39 (GRSNAGKS), 59-63 (GRTQH), 81-84 (DLPG), 148-151 (TKCD), and 185-188 (LFSA). Mg(2+) is bound by residues Ser39 and Thr61.

This sequence belongs to the TRAFAC class TrmE-Era-EngA-EngB-Septin-like GTPase superfamily. EngB GTPase family. Requires Mg(2+) as cofactor.

Its function is as follows. Necessary for normal cell division and for the maintenance of normal septation. In Burkholderia mallei (strain ATCC 23344), this protein is Probable GTP-binding protein EngB.